Consider the following 363-residue polypeptide: Cinnamyl alcohol dehydrogenase 2 (363 aa).

Cys-47 is a binding site for Zn(2+). Thr-49 contributes to the NADP(+) binding site. Residues His-69, Glu-70, Cys-100, Cys-103, Cys-106, Cys-114, and Cys-163 each coordinate Zn(2+). NADP(+)-binding positions include Thr-167, 188–193 (GLGGVG), 211–216 (SSSARK), Thr-251, Gly-275, and 298–300 (SFI).

Belongs to the zinc-containing alcohol dehydrogenase family. As to quaternary structure, homodimer. It depends on Zn(2+) as a cofactor. Expressed in roots behind the root tips in the pericycle region and layer of cortical cells adjacent to the exodermis. Expressed in vascular bundles and lateral veins of leaf sheaths and blades. Expressed in the vicinity of vascular bundles in the first internode below the inflorescence. Highly expressed in the culm.

The catalysed reaction is (E)-cinnamyl alcohol + NADP(+) = (E)-cinnamaldehyde + NADPH + H(+). It carries out the reaction (E)-coniferol + NADP(+) = (E)-coniferaldehyde + NADPH + H(+). It catalyses the reaction (E)-sinapyl alcohol + NADP(+) = (E)-sinapaldehyde + NADPH + H(+). The enzyme catalyses (E)-4-coumaroyl alcohol + NADP(+) = (E)-4-coumaraldehyde + NADPH + H(+). The catalysed reaction is (E)-caffeyl alcohol + NADP(+) = (E)-caffeyl aldehyde + NADPH + H(+). It participates in aromatic compound metabolism; phenylpropanoid biosynthesis. In terms of biological role, involved in lignin biosynthesis. Catalyzes the final step specific for the production of lignin monomers. Catalyzes the NADPH-dependent reduction of coniferaldehyde and sinapaldehyde to their respective alcohols. Plays the major role in monolignol biosynthesis. Functions cooperatively with COMT in the culm internodes for the biosynthesis of monolignols, the lignin precursors. May be involved in lignin biosynthesis in leaves and roots. The protein is Cinnamyl alcohol dehydrogenase 2 of Oryza sativa subsp. japonica (Rice).